Here is a 364-residue protein sequence, read N- to C-terminus: 3-methyl-2-oxobutanoate hydroxymethyltransferase 1, mitochondrial (364 aa).

Residues 1–59 (MMMMMRRAFRHLARQQRRPLSHVPESAVYGGPRPQDVGAAAGAGAGAGATRRVTVTTLR) constitute a mitochondrion transit peptide. 2 residues coordinate Mg(2+): Asp94 and Asp133. Residues 94 to 95 (DS), Asp133, and Lys163 each bind 3-methyl-2-oxobutanoate. Glu165 is a binding site for Mg(2+). The Proton acceptor role is filled by Glu233.

Belongs to the PanB family. It depends on Mg(2+) as a cofactor.

It is found in the mitochondrion. The catalysed reaction is 3-methyl-2-oxobutanoate + (6R)-5,10-methylene-5,6,7,8-tetrahydrofolate + H2O = 2-dehydropantoate + (6S)-5,6,7,8-tetrahydrofolate. The protein operates within cofactor biosynthesis; (R)-pantothenate biosynthesis; (R)-pantoate from 3-methyl-2-oxobutanoate: step 1/2. In terms of biological role, catalyzes the reversible reaction in which hydroxymethyl group from 5,10-methylenetetrahydrofolate is transferred onto alpha-ketoisovalerate to form ketopantoate. The sequence is that of 3-methyl-2-oxobutanoate hydroxymethyltransferase 1, mitochondrial (KPHMT1) from Oryza sativa subsp. japonica (Rice).